A 245-amino-acid polypeptide reads, in one-letter code: Probable transcriptional regulatory protein Cbei_4222 (245 aa).

The protein belongs to the TACO1 family.

The protein resides in the cytoplasm. The polypeptide is Probable transcriptional regulatory protein Cbei_4222 (Clostridium beijerinckii (strain ATCC 51743 / NCIMB 8052) (Clostridium acetobutylicum)).